The sequence spans 134 residues: uncharacterized protein (134 aa).

A run of 3 helical transmembrane segments spans residues 9–29 (PYFLAFLRIVVAYMFILHGTA), 49–69 (MLLVAGVIEIVGSILLILGLF), and 107–127 (ALLYSLLFLYFVFSGAGACAL).

The protein belongs to the DoxX family.

Its subcellular location is the cell membrane. This is an uncharacterized protein from Haemophilus influenzae (strain ATCC 51907 / DSM 11121 / KW20 / Rd).